A 947-amino-acid polypeptide reads, in one-letter code: Glutamate receptor 2.8 (947 aa).

An N-terminal signal peptide occupies residues 1 to 26 (MNPKKNNNTFLSYFVCLFLLLEVGLG). Residues 27–577 (QNQISEIKVG…NTWVFLKPWG (551 aa)) lie on the Extracellular side of the membrane. N-linked (GlcNAc...) asparagine glycans are attached at residues Asn42, Asn118, Asn333, Asn341, Asn348, Asn420, Asn478, and Asn524. The chain crosses the membrane as a helical span at residues 578–598 (LDLWVTTACFFVLIGFVVWLF). Residues 599–607 (EHRVNTDFR) lie on the Cytoplasmic side of the membrane. Residues 608-628 (GPPHHQIGTSFWFSFSTMVFA) form a helical membrane-spanning segment. Topologically, residues 629-632 (HREK) are cytoplasmic. A helical membrane pass occupies residues 633–653 (VVSNLARFVVVVWCFVVLVLT). The Extracellular portion of the chain corresponds to 654–819 (QSYTANLTSF…NRLSLRSFWG (166 aa)). Asn659, Asn704, Asn723, and Asn779 each carry an N-linked (GlcNAc...) asparagine glycan. Residues 820-840 (LFLIAGIASFLALLIFVFLFL) traverse the membrane as a helical segment. Topologically, residues 841–947 (YENRHTLCDD…ESDIECVVEQ (107 aa)) are cytoplasmic.

The protein belongs to the glutamate-gated ion channel (TC 1.A.10.1) family. As to quaternary structure, may form heteromers. Expressed predominantly in leaves.

Its subcellular location is the membrane. Functionally, glutamate-gated receptor that probably acts as a non-selective cation channel. May be involved in light-signal transduction and calcium homeostasis via the regulation of calcium influx into cells. The chain is Glutamate receptor 2.8 (GLR2.8) from Arabidopsis thaliana (Mouse-ear cress).